The primary structure comprises 191 residues: ADP-ribosylation factor (191 aa).

A lipid anchor (N-myristoyl glycine) is attached at glycine 2. GTP-binding positions include 24 to 31 (GLDAAGKT), 67 to 71 (DVGGQ), and 128 to 131 (NKQD).

It belongs to the small GTPase superfamily. Arf family.

The protein localises to the golgi apparatus. Its function is as follows. GTP-binding protein involved in protein trafficking; may modulate vesicle budding and uncoating within the Golgi apparatus. The sequence is that of ADP-ribosylation factor from Giardia intestinalis (Giardia lamblia).